Consider the following 461-residue polypeptide: Cysteine--tRNA ligase (461 aa).

Cys-29 is a Zn(2+) binding site. A 'HIGH' region motif is present at residues 31–41 (PTVYNYAHIGN). Zn(2+) contacts are provided by Cys-214, His-239, and Glu-243. Residues 271–275 (KMSKS) carry the 'KMSKS' region motif. Lys-274 is an ATP binding site.

Belongs to the class-I aminoacyl-tRNA synthetase family. In terms of assembly, monomer. Zn(2+) is required as a cofactor.

It localises to the cytoplasm. It carries out the reaction tRNA(Cys) + L-cysteine + ATP = L-cysteinyl-tRNA(Cys) + AMP + diphosphate. The chain is Cysteine--tRNA ligase from Hyphomonas neptunium (strain ATCC 15444).